The primary structure comprises 212 residues: Ribosomal RNA small subunit methyltransferase G (212 aa).

Residues glycine 72, leucine 77, 123-124, and arginine 138 each bind S-adenosyl-L-methionine; that span reads VE.

It belongs to the methyltransferase superfamily. RNA methyltransferase RsmG family.

The protein resides in the cytoplasm. It carries out the reaction guanosine(527) in 16S rRNA + S-adenosyl-L-methionine = N(7)-methylguanosine(527) in 16S rRNA + S-adenosyl-L-homocysteine. Specifically methylates the N7 position of guanine in position 527 of 16S rRNA. The sequence is that of Ribosomal RNA small subunit methyltransferase G from Histophilus somni (strain 129Pt) (Haemophilus somnus).